Here is a 706-residue protein sequence, read N- to C-terminus: Acyl-coenzyme A oxidase (706 aa).

The segment at 682 to 706 (MLNRPSKEERERFEKSTETAKILSK) is disordered. Positions 686–699 (PSKEERERFEKSTE) are enriched in basic and acidic residues.

This sequence belongs to the acyl-CoA oxidase family. It depends on FAD as a cofactor.

The protein resides in the peroxisome. It catalyses the reaction a 2,3-saturated acyl-CoA + O2 = a (2E)-enoyl-CoA + H2O2. The protein operates within lipid metabolism; peroxisomal fatty acid beta-oxidation. The polypeptide is Acyl-coenzyme A oxidase (POX1) (Debaryomyces hansenii (strain ATCC 36239 / CBS 767 / BCRC 21394 / JCM 1990 / NBRC 0083 / IGC 2968) (Yeast)).